We begin with the raw amino-acid sequence, 349 residues long: GDP-mannose:glycolipid 4-beta-D-mannosyltransferase (349 aa).

An N-terminal signal peptide occupies residues 1-14; that stretch reads MSASASLPVTRAAA.

This sequence belongs to the glycosyltransferase 94 family.

It is found in the cell inner membrane. It catalyses the reaction beta-D-GlcA-(1-&gt;2)-alpha-D-Man-(1-&gt;3)-beta-D-Glc-(1-&gt;4)-alpha-D-Glc-di-trans,octa-cis-undecaprenyl diphosphate + GDP-alpha-D-mannose = beta-D-Man-(1-&gt;4)-beta-D-GlcA-(1-&gt;2)-alpha-D-Man-(1-&gt;3)-beta-D-Glc-(1-&gt;4)-alpha-D-Glc-di-trans,octa-cis-undecaprenyl diphosphate + GDP + H(+). It functions in the pathway glycan biosynthesis; xanthan biosynthesis. Its function is as follows. Nonprocessive beta-mannosyltransferase that catalyzes the transfer of a mannose residue from GDP-mannose to glucuronic acid-beta-1,2-mannose-alpha-1,3-glucose-beta-1,4-glucose-PP-polyisoprenyl to form the lipid-linked pentasaccharide repeating unit of xanthan, Man-GlcA-Man-Glc(2)-PP-Pol. Is involved in the biosynthesis of the exopolysaccharide xanthan. To a lesser extent, can also use ADP-Man and even GDP-Glc as sugar donor substrates in vitro. Is unable to transfer a Man residue to the free-tetrasaccharide GlcA-Man-Glc(2) used as an acceptor, which indicates that the diphosphate group and the lipid moiety in the acceptor substrate are of major importance for acceptor binding and catalysis. The polypeptide is GDP-mannose:glycolipid 4-beta-D-mannosyltransferase (gumI) (Xanthomonas campestris pv. campestris).